The sequence spans 489 residues: Protein-export membrane protein SecD (489 aa).

6 helical membrane-spanning segments follow: residues 17 to 37 (VLIV…IPPA), 328 to 348 (FIQI…AFMV), 356 to 376 (SIVV…LGIA), 384 to 404 (LASI…LVVI), 428 to 448 (LGII…LALM), and 450 to 470 (LSTL…GVIF).

Belongs to the SecD/SecF family. SecD subfamily. In terms of assembly, part of the protein translocation apparatus. Forms a complex with SecF.

The protein resides in the cell membrane. Functionally, involved in protein export. This is Protein-export membrane protein SecD from Methanolacinia petrolearia (strain DSM 11571 / OCM 486 / SEBR 4847) (Methanoplanus petrolearius).